Consider the following 226-residue polypeptide: TPD1 protein homolog 1A (226 aa).

A signal peptide spans 1–35 (MRVSSASSTPPPPAFAAAAWAVVLLAMLRSDVALA).

In terms of assembly, interacts with MSP1. Expressed in roots, and anthers and ovules during meiosis.

In terms of biological role, involved in cell specification during anther development. Required for the differentiation of primary parietal cells into secondary parietal cells in anthers. May serve as an extracellular ligand for the MSP1 receptor kinase to limit sporocyte number in ovules. The sequence is that of TPD1 protein homolog 1A from Oryza sativa subsp. japonica (Rice).